The following is a 172-amino-acid chain: Ribosome maturation factor RimM (172 aa).

One can recognise a PRC barrel domain in the interval 96–168 (EGEFYYHQII…RVDVELMEGL (73 aa)).

It belongs to the RimM family. In terms of assembly, binds ribosomal protein uS19.

It localises to the cytoplasm. An accessory protein needed during the final step in the assembly of 30S ribosomal subunit, possibly for assembly of the head region. Essential for efficient processing of 16S rRNA. May be needed both before and after RbfA during the maturation of 16S rRNA. It has affinity for free ribosomal 30S subunits but not for 70S ribosomes. The chain is Ribosome maturation factor RimM from Streptococcus pyogenes serotype M28 (strain MGAS6180).